The following is a 379-amino-acid chain: Mannitol-1-phosphate 5-dehydrogenase (379 aa).

3-14 is an NAD(+) binding site; that stretch reads ALHFGAGNIGRG.

Belongs to the mannitol dehydrogenase family.

The catalysed reaction is D-mannitol 1-phosphate + NAD(+) = beta-D-fructose 6-phosphate + NADH + H(+). The polypeptide is Mannitol-1-phosphate 5-dehydrogenase (Bacillus licheniformis (strain ATCC 14580 / DSM 13 / JCM 2505 / CCUG 7422 / NBRC 12200 / NCIMB 9375 / NCTC 10341 / NRRL NRS-1264 / Gibson 46)).